We begin with the raw amino-acid sequence, 80 residues long: MPKRVLQGVVVSDKNDKTVVVKVERRYSHPLLQKTVRQSKKYKAHDENNQFKVGDLVSIQESAPISKDKRWVVLTNEAAG.

This sequence belongs to the universal ribosomal protein uS17 family. As to quaternary structure, part of the 30S ribosomal subunit.

Its function is as follows. One of the primary rRNA binding proteins, it binds specifically to the 5'-end of 16S ribosomal RNA. This chain is Small ribosomal subunit protein uS17, found in Brucella anthropi (strain ATCC 49188 / DSM 6882 / CCUG 24695 / JCM 21032 / LMG 3331 / NBRC 15819 / NCTC 12168 / Alc 37) (Ochrobactrum anthropi).